A 275-amino-acid chain; its full sequence is Formamidopyrimidine-DNA glycosylase (275 aa).

The active-site Schiff-base intermediate with DNA is Pro-2. Glu-3 functions as the Proton donor in the catalytic mechanism. The active-site Proton donor; for beta-elimination activity is the Lys-59. The DNA site is built by His-92, Arg-111, and Lys-155. The segment at Tyr-240–Gln-274 adopts an FPG-type zinc-finger fold. The active-site Proton donor; for delta-elimination activity is the Arg-264.

Belongs to the FPG family. Monomer. Zn(2+) is required as a cofactor.

The catalysed reaction is Hydrolysis of DNA containing ring-opened 7-methylguanine residues, releasing 2,6-diamino-4-hydroxy-5-(N-methyl)formamidopyrimidine.. It carries out the reaction 2'-deoxyribonucleotide-(2'-deoxyribose 5'-phosphate)-2'-deoxyribonucleotide-DNA = a 3'-end 2'-deoxyribonucleotide-(2,3-dehydro-2,3-deoxyribose 5'-phosphate)-DNA + a 5'-end 5'-phospho-2'-deoxyribonucleoside-DNA + H(+). In terms of biological role, involved in base excision repair of DNA damaged by oxidation or by mutagenic agents. Acts as a DNA glycosylase that recognizes and removes damaged bases. Has a preference for oxidized purines, such as 7,8-dihydro-8-oxoguanine (8-oxoG). Has AP (apurinic/apyrimidinic) lyase activity and introduces nicks in the DNA strand. Cleaves the DNA backbone by beta-delta elimination to generate a single-strand break at the site of the removed base with both 3'- and 5'-phosphates. In Exiguobacterium sp. (strain ATCC BAA-1283 / AT1b), this protein is Formamidopyrimidine-DNA glycosylase.